The following is a 782-amino-acid chain: Glucocorticoid receptor (782 aa).

The disordered stretch occupies residues 1–20 (MDPKESLTPPSREEIPSSVL). Residues 1–425 (MDPKESLTPP…SAATGPPPKL (425 aa)) form a modulating region. Position 8 is a phosphothreonine (Thr-8). Arg-24 is subject to Omega-N-methylarginine. A Phosphoserine modification is found at Ser-46. The disordered stretch occupies residues 48 to 79 (SLAAVSQPDSKQQRLAVDFPKGSGSNAQQPDL). Phosphoserine is present on residues Ser-114, Ser-135, Ser-142, Ser-208, Ser-216, and Ser-231. The segment at 130 to 184 (LSRSTSVPENPKSSASAAGPAAPAEKAFPKTHSDGAPEQPNVKGQTGTNGGNVKL) is disordered. A compositionally biased stretch (low complexity) spans 140–155 (PKSSASAAGPAAPAEK). A Glycyl lysine isopeptide (Lys-Gly) (interchain with G-Cter in SUMO2) cross-link involves residue Lys-263. Ser-272 carries the post-translational modification Phosphoserine. Residues Lys-282 and Lys-298 each participate in a glycyl lysine isopeptide (Lys-Gly) (interchain with G-Cter in SUMO); alternate cross-link. Residues Lys-282 and Lys-298 each participate in a glycyl lysine isopeptide (Lys-Gly) (interchain with G-Cter in SUMO2); alternate cross-link. 2 positions are modified to phosphoserine: Ser-312 and Ser-410. Residue Lys-424 forms a Glycyl lysine isopeptide (Lys-Gly) (interchain with G-Cter in ubiquitin) linkage. NR C4-type zinc fingers lie at residues 426–446 (CLVC…CGSC) and 462–486 (CAGR…YRKC). The segment at residues 426–491 (CLVCSDEASG…RYRKCLQAGM (66 aa)) is a DNA-binding region (nuclear receptor). N6-acetyllysine is present on residues Lys-485, Lys-497, Lys-499, and Lys-500. The tract at residues 490 to 782 (GMNLEARKTK…NIKKLLFHQK (293 aa)) is interaction with CLOCK. The interval 492–528 (NLEARKTKKKIKGIQQATTGVSQETSENSANKTIVPA) is hinge. One can recognise an NR LBD domain in the interval 529–763 (TLPQLTPTLV…FPEMLAEIIT (235 aa)). Positions 537–702 (LVSLLEVIEP…EIRMTYIKEL (166 aa)) are interaction with CRY1. A Glycyl lysine isopeptide (Lys-Gly) (interchain with G-Cter in SUMO) cross-link involves residue Lys-708.

It belongs to the nuclear hormone receptor family. NR3 subfamily. In terms of assembly, heteromultimeric cytoplasmic complex with HSP90AA1, HSPA1A/HSPA1B, and FKBP5 or another immunophilin such as PPID, STIP1, or the immunophilin homolog PPP5C. Upon ligand binding FKBP5 dissociates from the complex and FKBP4 takes its place, thereby linking the complex to dynein and mediating transport to the nucleus, where the complex dissociates. Probably forms a complex composed of chaperones HSP90 and HSP70, co-chaperones CDC37, PPP5C, TSC1 and client protein TSC2, CDK4, AKT, RAF1 and NR3C1; this complex does not contain co-chaperones STIP1/HOP and PTGES3/p23. Directly interacts with UNC45A. Binds to DNA as a homodimer, and as heterodimer with NR3C2 or the retinoid X receptor. Binds STAT5A and STAT5B homodimers and heterodimers. Interacts with NRIP1, POU2F1, POU2F2 and TRIM28. Interacts with several coactivator complexes, including the SMARCA4 complex, CREBBP/EP300, TADA2L (Ada complex) and p160 coactivators such as NCOA2 and NCOA6. Interaction with BAG1 inhibits transactivation. Interacts with HEXIM1 and TGFB1I1. Interacts with NCOA1. Interacts with NCOA3, SMARCA4, SMARCC1, SMARCD1, and SMARCE1. Interacts with CLOCK, CRY1 and CRY2 in a ligand-dependent fashion. Interacts with CIART. Interacts with RWDD3. Interacts with UBE2I/UBC9 and this interaction is enhanced in the presence of RWDD3. Interacts with GRIP1. Interacts with NR4A3 (via nuclear receptor DNA-binding domain), represses transcription activity of NR4A3 on the POMC promoter Nur response element (NurRE). Directly interacts with PNRC2 to attract and form a complex with UPF1 and DCP1A; the interaction leads to rapid mRNA degradation. Interacts with GSK3B. Interacts with FNIP1 and FNIP2. Interacts (via C-terminus) with HNRNPU (via C-terminus). Interacts with MCM3AP. Interacts (via domain NR LBD) with HSP90AA1 and HSP90AB1. In the absence of hormonal ligand, interacts with TACC1. Interacts (via NR LBD domain) with ZNF764 (via KRAB domain); the interaction regulates transcription factor activity of NR3C1 by directing its actions toward certain biologic pathways. Post-translationally, acetylation by CLOCK reduces its binding to glucocorticoid response elements and its transcriptional activity. Increased proteasome-mediated degradation in response to glucocorticoids. In terms of processing, phosphorylated in the absence of hormone; becomes hyperphosphorylated in the presence of glucocorticoid. The Ser-208, Ser-231 and Ser-410-phosphorylated forms are mainly cytoplasmic, and the Ser-216-phosphorylated form is nuclear. Phosphorylation at Ser-216 increases transcriptional activity. Phosphorylation at Ser-208, Ser-231 and Ser-410 decreases signaling capacity. Phosphorylation at Ser-410 may protect from glucocorticoid-induced apoptosis. Phosphorylation at Ser-208 and Ser-216 is not required in regulation of chromosome segregation. May be dephosphorylated by PPP5C, attenuates NR3C1 action. Post-translationally, ubiquitinated by UBR5, leading to its degradation: UBR5 specifically recognizes and binds ligand-bound NR3C1 when it is not associated with coactivators (NCOAs). In presence of NCOAs, the UBR5-degron is not accessible, preventing its ubiquitination and degradation. Sumoylation at Lys-282 and Lys-298 negatively regulates its transcriptional activity. Sumoylation at Lys-708 positively regulates its transcriptional activity in the presence of RWDD3. Sumoylation at Lys-282 and Lys-298 is dispensable whereas sumoylation at Lys-708 is critical for the stimulatory effect of RWDD3 on its transcriptional activity. Heat shock increases sumoylation in a RWDD3-dependent manner.

The protein localises to the cytoplasm. Its subcellular location is the nucleus. It is found in the mitochondrion. The protein resides in the cytoskeleton. It localises to the spindle. The protein localises to the microtubule organizing center. Its subcellular location is the centrosome. It is found in the chromosome. The protein resides in the nucleoplasm. Functionally, receptor for glucocorticoids (GC). Has a dual mode of action: as a transcription factor that binds to glucocorticoid response elements (GRE), both for nuclear and mitochondrial DNA, and as a modulator of other transcription factors. Affects inflammatory responses, cellular proliferation and differentiation in target tissues. Involved in chromatin remodeling. Plays a role in rapid mRNA degradation by binding to the 5' UTR of target mRNAs and interacting with PNRC2 in a ligand-dependent manner which recruits the RNA helicase UPF1 and the mRNA-decapping enzyme DCP1A, leading to RNA decay. Could act as a coactivator for STAT5-dependent transcription upon growth hormone (GH) stimulation and could reveal an essential role of hepatic GR in the control of body growth. Mediates glucocorticoid-induced apoptosis. Promotes accurate chromosome segregation during mitosis. May act as a tumor suppressor. May play a negative role in adipogenesis through the regulation of lipolytic and antilipogenic gene expression. In Sus scrofa (Pig), this protein is Glucocorticoid receptor (NR3C1).